Reading from the N-terminus, the 78-residue chain is Putative membrane protein insertion efficiency factor (78 aa).

This sequence belongs to the UPF0161 family.

It localises to the cell inner membrane. Its function is as follows. Could be involved in insertion of integral membrane proteins into the membrane. This Prochlorococcus marinus (strain MIT 9301) protein is Putative membrane protein insertion efficiency factor.